The primary structure comprises 260 residues: Acetylglutamate kinase (260 aa).

Substrate contacts are provided by residues 46-47 (GG), Arg68, and Asn160.

This sequence belongs to the acetylglutamate kinase family. ArgB subfamily.

It localises to the cytoplasm. The catalysed reaction is N-acetyl-L-glutamate + ATP = N-acetyl-L-glutamyl 5-phosphate + ADP. The protein operates within amino-acid biosynthesis; L-arginine biosynthesis; N(2)-acetyl-L-ornithine from L-glutamate: step 2/4. Its function is as follows. Catalyzes the ATP-dependent phosphorylation of N-acetyl-L-glutamate. The protein is Acetylglutamate kinase of Shewanella baltica (strain OS223).